A 427-amino-acid chain; its full sequence is Adenylosuccinate synthetase (427 aa).

GTP contacts are provided by residues glycine 12 to lysine 18 and glycine 40 to threonine 42. Aspartate 13 serves as the catalytic Proton acceptor. 2 residues coordinate Mg(2+): aspartate 13 and glycine 40. IMP contacts are provided by residues aspartate 13 to lysine 16, asparagine 38 to histidine 41, threonine 128, arginine 142, glutamine 223, threonine 238, and arginine 302. Catalysis depends on histidine 41, which acts as the Proton donor. Valine 298–arginine 304 serves as a coordination point for substrate. GTP is bound by residues arginine 304, lysine 330 to aspartate 332, and glycine 412 to glycine 414.

This sequence belongs to the adenylosuccinate synthetase family. In terms of assembly, homodimer. Requires Mg(2+) as cofactor.

It is found in the cytoplasm. The enzyme catalyses IMP + L-aspartate + GTP = N(6)-(1,2-dicarboxyethyl)-AMP + GDP + phosphate + 2 H(+). It participates in purine metabolism; AMP biosynthesis via de novo pathway; AMP from IMP: step 1/2. Functionally, plays an important role in the de novo pathway of purine nucleotide biosynthesis. Catalyzes the first committed step in the biosynthesis of AMP from IMP. The polypeptide is Adenylosuccinate synthetase (Streptomyces coelicolor (strain ATCC BAA-471 / A3(2) / M145)).